A 412-amino-acid chain; its full sequence is Putative competence-damage inducible protein (412 aa).

This sequence belongs to the CinA family.

In Bacillus cereus (strain AH820), this protein is Putative competence-damage inducible protein.